The chain runs to 272 residues: tRNA pseudouridine synthase B (272 aa).

The active-site Nucleophile is Asp-38.

This sequence belongs to the pseudouridine synthase TruB family. Type 1 subfamily.

The enzyme catalyses uridine(55) in tRNA = pseudouridine(55) in tRNA. Responsible for synthesis of pseudouridine from uracil-55 in the psi GC loop of transfer RNAs. In Campylobacter jejuni subsp. jejuni serotype O:6 (strain 81116 / NCTC 11828), this protein is tRNA pseudouridine synthase B.